A 180-amino-acid polypeptide reads, in one-letter code: Putative phycocyanobilin lyase CpcS 2 (180 aa).

Belongs to the CpcS/CpeS biliprotein lyase family.

In terms of biological role, covalently attaches a chromophore to Cys residue(s) of phycobiliproteins (Potential). In vitro does not act as a chromophore lyase for ApcA1, ApcA2, ApcB, ApcD, ApcF, CpcB or PecB, the lyase activity is therefore unsure. The sequence is that of Putative phycocyanobilin lyase CpcS 2 (cpeS2) from Nostoc sp. (strain PCC 7120 / SAG 25.82 / UTEX 2576).